The primary structure comprises 73 residues: Putative antitoxin VapB21 (73 aa).

Belongs to the UPF0330 family.

Possibly the antitoxin component of a type II toxin-antitoxin (TA) system. Its cognate toxin is VapC21 (Potential). This chain is Putative antitoxin VapB21 (vapB21), found in Sulfurisphaera tokodaii (strain DSM 16993 / JCM 10545 / NBRC 100140 / 7) (Sulfolobus tokodaii).